The following is a 43-amino-acid chain: Iota-conotoxin-like Fi11.6 (43 aa).

Disulfide bonds link cysteine 2/cysteine 16, cysteine 9/cysteine 19, cysteine 15/cysteine 24, and cysteine 18/cysteine 35. 4-hydroxyproline is present on proline 8. Proline 26 carries the post-translational modification 4-hydroxyproline. At tryptophan 30 the chain carries 6'-bromotryptophan. Phenylalanine 41 is modified (D-phenylalanine).

It belongs to the conotoxin I1 superfamily. Expressed by the venom duct.

The protein localises to the secreted. Iota-conotoxins bind to voltage-gated sodium channels (Nav) and act as agonists by shifting the voltage-dependence of activation to more hyperpolarized levels. Produces general excitatory symptoms. The polypeptide is Iota-conotoxin-like Fi11.6 (Conus figulinus (Fig cone)).